The following is a 552-amino-acid chain: Probable protein kinase UbiB (552 aa).

The helical transmembrane segment at 22–42 (LLPANLPLAATLLLLPFKLFP) threads the bilayer. A Protein kinase domain is found at 118-498 (SFNIEPLASA…QQLARQRNRR (381 aa)). Residues 124–132 (LASASVAQV) and K146 each bind ATP. Catalysis depends on D281, which acts as the Proton acceptor. The next 2 membrane-spanning stretches (helical) occupy residues 501-521 (ITLL…GEGI) and 530-550 (FGDI…AWLL).

This sequence belongs to the ABC1 family. UbiB subfamily.

The protein localises to the cell inner membrane. The protein operates within cofactor biosynthesis; ubiquinone biosynthesis [regulation]. In terms of biological role, is probably a protein kinase regulator of UbiI activity which is involved in aerobic coenzyme Q (ubiquinone) biosynthesis. The polypeptide is Probable protein kinase UbiB (Cellvibrio japonicus (strain Ueda107) (Pseudomonas fluorescens subsp. cellulosa)).